The chain runs to 547 residues: NADH-ubiquinone oxidoreductase chain 5 (547 aa).

15 consecutive transmembrane segments (helical) span residues 3 to 23 (ISIFLMVFLLFCVSLFLIFFV), 45 to 65 (YFNSIMFSLILLLVTISVLVF), 80 to 100 (YFMLLVFVGSMFSLIFSSGCF), 101 to 121 (SMLVSWDLLGISSFFLVLFYN), 132 to 152 (TVLTNRLGDFFLFVFFSSTIF), 198 to 218 (ISSLVHSSTLVTAGLVLIMNF), 227 to 247 (VIMIIMVVGVFTMFFSSMAAL), 264 to 284 (MGFSMLTVGIGLSFVSFIHLL), 319 to 339 (VPYFIQLQLLVTLFCLCGLVF), 352 to 372 (FFFSNFFMVVFACMFFFSVFL), 399 to 419 (VVMNFLSLLLVLFSIFFIWWM), 430 to 450 (FLYVDFFVPLFFVVMIMVVGF), 460 to 477 (FVYKFLVDFFAKGWVYGL), 485 to 505 (LFLGGINSLGVTFFSFTGFWS), and 512 to 532 (LYFNSVVIVLVLFFFLVWGCI).

The protein belongs to the complex I subunit 5 family.

The protein resides in the mitochondrion inner membrane. It catalyses the reaction a ubiquinone + NADH + 5 H(+)(in) = a ubiquinol + NAD(+) + 4 H(+)(out). Core subunit of the mitochondrial membrane respiratory chain NADH dehydrogenase (Complex I) that is believed to belong to the minimal assembly required for catalysis. Complex I functions in the transfer of electrons from NADH to the respiratory chain. The immediate electron acceptor for the enzyme is believed to be ubiquinone. The chain is NADH-ubiquinone oxidoreductase chain 5 (ND5) from Ascaris suum (Pig roundworm).